The sequence spans 284 residues: NAD kinase (284 aa).

Residue aspartate 60 is the Proton acceptor of the active site. Residues aspartate 60–glycine 61, asparagine 134–aspartate 135, lysine 145, arginine 162, aspartate 164, and glutamine 235 contribute to the NAD(+) site.

It belongs to the NAD kinase family. A divalent metal cation is required as a cofactor.

It localises to the cytoplasm. It catalyses the reaction NAD(+) + ATP = ADP + NADP(+) + H(+). Involved in the regulation of the intracellular balance of NAD and NADP, and is a key enzyme in the biosynthesis of NADP. Catalyzes specifically the phosphorylation on 2'-hydroxyl of the adenosine moiety of NAD to yield NADP. This Treponema denticola (strain ATCC 35405 / DSM 14222 / CIP 103919 / JCM 8153 / KCTC 15104) protein is NAD kinase.